The primary structure comprises 626 residues: MEGAADQTTKALSELAMDSSTTLNAAESSAGDGAGPRSKNALKKEQKMKQKEEEKRRKDEEKAEKAKQAPKASSQKAVAADDEEMDATQYYENRLKYLAAEKAKGENPYPHKFAVSMSIPKYIETYGSLNNGDHVENAEESLAGRIMSKRSSSSKLFFYDLHGDDFKVQVMADASKSGLDEAEFLKLHSNAKRGDIVGVIGFPGKTKRGELSIFPRSFILLSHCLHMMPRKADNVNAKKPEIWVPGQTRNPEAYVLKDQESRYRQRHLDMILNVEVRQIFRTRAKIISYVRRFLDNKNFLEVETPMMNMIAGGAAARPFVTHHNDLDMRLYMRIAPELYLKQLIVGGLERVYEIGKQFRNEGIDLTHNPEFTTCEFYMAFADYNDLMEMTEVMLSGMVKELTGGYKIKYNANGYDKDPIEIDFTPPFRRIEMIGELEKVAKLNIPKDLASEEANKYLIDACARFDVKCPPPQTTARLLDKLVGEFLEPTCVNPTFIINQPEIMSPLAKWHRSKSGLTERFELFINKHELCNAYTELNDPVVQRQRFADQLKDRQSGDDEAMALDETFCNALEYGLAPTGGWGLGIDRLSMLLTDSLNIKEVLFFPAMRPPQEESAAAQAPLTEEKK.

M1 carries the N-acetylmethionine modification. Polar residues-rich tracts occupy residues 1-11 and 18-27; these read MEGAADQTTKA and DSSTTLNAAE. The disordered stretch occupies residues 1-84; the sequence is MEGAADQTTK…QKAVAADDEE (84 aa). The stretch at 37–69 forms a coiled coil; it reads RSKNALKKEQKMKQKEEEKRRKDEEKAEKAKQA. The span at 42-67 shows a compositional bias: basic and acidic residues; sequence LKKEQKMKQKEEEKRRKDEEKAEKAK. The segment covering 69 to 78 has biased composition (low complexity); it reads APKASSQKAV. Residues 141-217 constitute a DNA-binding region (OB); that stretch reads SLAGRIMSKR…RGELSIFPRS (77 aa). Substrate-binding residues include G313 and E337. Residues 359–361 and 367–368 each bind ATP; these read RNE and HN. Substrate-binding residues include E375 and Y377. E521 and E528 together coordinate Ca(2+). 528-529 is an ATP binding site; it reads EL. N531 and E535 together coordinate substrate. 584–587 lines the ATP pocket; sequence GIDR.

This sequence belongs to the class-II aminoacyl-tRNA synthetase family. Requires Ca(2+) as cofactor.

It is found in the cytoplasm. The protein resides in the cytosol. It catalyses the reaction tRNA(Lys) + L-lysine + ATP = L-lysyl-tRNA(Lys) + AMP + diphosphate. In terms of biological role, catalyzes the specific attachment of an amino acid to its cognate tRNA in a 2 step reaction: the amino acid (AA) is first activated by ATP to form AA-AMP and then transferred to the acceptor end of the tRNA. Promotes aminoacylation of non-cognate tRNAs and translational recoding of lysine at nonsense codons. The polypeptide is Lysine--tRNA ligase, cytoplasmic (Arabidopsis thaliana (Mouse-ear cress)).